Consider the following 160-residue polypeptide: Ribosomal RNA large subunit methyltransferase H (160 aa).

Residues L77, G109, and 128–133 (FSRMTF) contribute to the S-adenosyl-L-methionine site.

Belongs to the RNA methyltransferase RlmH family. In terms of assembly, homodimer.

Its subcellular location is the cytoplasm. The enzyme catalyses pseudouridine(1915) in 23S rRNA + S-adenosyl-L-methionine = N(3)-methylpseudouridine(1915) in 23S rRNA + S-adenosyl-L-homocysteine + H(+). Its function is as follows. Specifically methylates the pseudouridine at position 1915 (m3Psi1915) in 23S rRNA. The chain is Ribosomal RNA large subunit methyltransferase H from Pelotomaculum thermopropionicum (strain DSM 13744 / JCM 10971 / SI).